The sequence spans 419 residues: Glutamate-1-semialdehyde 2,1-aminomutase (419 aa).

N6-(pyridoxal phosphate)lysine is present on lysine 259.

Belongs to the class-III pyridoxal-phosphate-dependent aminotransferase family. HemL subfamily. It depends on pyridoxal 5'-phosphate as a cofactor.

The protein resides in the cytoplasm. The catalysed reaction is (S)-4-amino-5-oxopentanoate = 5-aminolevulinate. The protein operates within porphyrin-containing compound metabolism; protoporphyrin-IX biosynthesis; 5-aminolevulinate from L-glutamyl-tRNA(Glu): step 2/2. This Sulfurisphaera tokodaii (strain DSM 16993 / JCM 10545 / NBRC 100140 / 7) (Sulfolobus tokodaii) protein is Glutamate-1-semialdehyde 2,1-aminomutase (hemL).